A 152-amino-acid chain; its full sequence is Arginine repressor (152 aa).

It belongs to the ArgR family.

It is found in the cytoplasm. It functions in the pathway amino-acid biosynthesis; L-arginine biosynthesis [regulation]. Regulates arginine biosynthesis genes. The chain is Arginine repressor from Caldicellulosiruptor saccharolyticus (strain ATCC 43494 / DSM 8903 / Tp8T 6331).